The following is a 206-amino-acid chain: High frequency lysogenization protein HflD homolog (206 aa).

The protein belongs to the HflD family.

The protein resides in the cytoplasm. Its subcellular location is the cell inner membrane. This Pseudomonas syringae pv. tomato (strain ATCC BAA-871 / DC3000) protein is High frequency lysogenization protein HflD homolog.